Reading from the N-terminus, the 234-residue chain is Mitochondrial assembly of ribosomal large subunit protein 1 (234 aa).

The segment at Ser63–Thr88 is disordered.

Belongs to the Iojap/RsfS family. As to quaternary structure, associates with the mitochondrial ribosome large subunit (39S) via interaction with MRPL12 and/or MRPL14. The interaction generates steric hindrance that is expected to prevent premature association of the 28S and 39S ribosomal subunits. Interacts with intermediates of the mitochondrial ribosome large subunit (mt-LSU) (recruits the mitochondrial ribosome and complex I assembly factor AltMIEF1 and NDUFAB1); regulates mitochondrial ribosomes assembly. Interacts with MRPL12 and MRPL14.

The protein resides in the mitochondrion matrix. Its function is as follows. Required for normal mitochondrial ribosome function and mitochondrial translation. May play a role in ribosome biogenesis by preventing premature association of the 28S and 39S ribosomal subunits. Interacts with mitochondrial ribosomal protein uL14m (MRPL14), probably blocking formation of intersubunit bridge B8, preventing association of the 28S and 39S ribosomal subunits. Addition to isolated mitochondrial ribosomal subunits partially inhibits translation, probably by interfering with the association of the 28S and 39S ribosomal subunits and the formation of functional ribosomes. May also participate in the assembly and/or regulation of the stability of the large subunit of the mitochondrial ribosome. May function as a ribosomal silencing factor. This chain is Mitochondrial assembly of ribosomal large subunit protein 1 (MALSU1), found in Homo sapiens (Human).